Consider the following 559-residue polypeptide: Acetolactate synthase, catabolic (559 aa).

FAD-binding positions include arginine 159, 263–284 (FNNQ…IGYS), and 304–323 (DVLP…LVGD). Aspartate 447 provides a ligand contact to Mg(2+).

Belongs to the TPP enzyme family. Homodimer.

The catalysed reaction is 2 pyruvate + H(+) = (2S)-2-acetolactate + CO2. The protein operates within polyol metabolism; (R,R)-butane-2,3-diol biosynthesis; (R,R)-butane-2,3-diol from pyruvate: step 1/3. This is Acetolactate synthase, catabolic (budB) from Raoultella terrigena (Klebsiella terrigena).